Consider the following 612-residue polypeptide: uncharacterized protein (612 aa).

The next 6 helical transmembrane spans lie at I13–P33, A38–A58, T67–I87, G107–L127, L144–S164, and L189–L209. 2 RCK C-terminal domains span residues G218–I302 and N316–L403. 6 consecutive transmembrane segments (helical) span residues A419 to V439, I459 to T479, L501 to L521, A525 to P545, L546 to Y566, and I586 to Y606.

The protein belongs to the SLC13A/DASS transporter (TC 2.A.47) family. NADC subfamily.

It localises to the cell membrane. This is an uncharacterized protein from Synechocystis sp. (strain ATCC 27184 / PCC 6803 / Kazusa).